Consider the following 679-residue polypeptide: NADPH--cytochrome P450 reductase (679 aa).

Over 1–21 the chain is Lumenal; the sequence is MADSHGDTGATMPEAAAQEAS. The helical transmembrane segment at 22–42 threads the bilayer; sequence VFSMTDVVLFSLIVGLITYWF. At 43–679 the chain is on the cytoplasmic side; sequence LFRKKKEEVP…KGRYSLDVWS (637 aa). S64 carries the phosphoserine modification. The 145-residue stretch at 81 to 225 folds into the Flavodoxin-like domain; sequence IVVFYGSQTG…DFITWREQFW (145 aa). FMN contacts are provided by residues 87-92, 139-142, 174-183, and D209; these read SQTGTA, ATYG, and LGNKTYEHFN. An FAD-binding FR-type domain is found at 280–522; that stretch reads KNPFLATVTT…FVRKSQFRLP (243 aa). R299 is a binding site for NADP(+). FAD-binding positions include R425, 455–458, 473–475, Y479, and 489–492; these read RYYS, CAV, and GVAT. NADP(+) is bound by residues T536, 597–598, 603–607, and D640; these read SR and KVYVQ. Position 678 (W678) interacts with FAD.

The protein belongs to the NADPH--cytochrome P450 reductase family. This sequence in the N-terminal section; belongs to the flavodoxin family. It in the C-terminal section; belongs to the flavoprotein pyridine nucleotide cytochrome reductase family. The cofactor is FAD. It depends on FMN as a cofactor.

The protein localises to the endoplasmic reticulum membrane. It carries out the reaction 2 oxidized [cytochrome P450] + NADPH = 2 reduced [cytochrome P450] + NADP(+) + H(+). This enzyme is required for electron transfer from NADP to cytochrome P450 in microsomes. It can also provide electron transfer to heme oxygenase and cytochrome B5. This Oryctolagus cuniculus (Rabbit) protein is NADPH--cytochrome P450 reductase.